A 208-amino-acid chain; its full sequence is Mitochondrial import inner membrane translocase subunit Tim23 (208 aa).

3 consecutive transmembrane segments (helical) span residues 73 to 93, 125 to 145, and 173 to 193; these read FELAFFTIGGCCITGAAFGTL, ASWANTLGSVALLYSVFGVAI, and GLKGVARGGLIGLAMSGLYAL.

It belongs to the Tim17/Tim22/Tim23 family. As to quaternary structure, component of the TIM23 complex at least composed of timm23, timm17 and timm50. The complex interacts with the timm44 component of the PAM complex.

It localises to the mitochondrion inner membrane. In terms of biological role, essential component of the TIM23 complex, a complex that mediates the translocation of transit peptide-containing proteins across the mitochondrial inner membrane. Plays an essential role in early embryonic development. The protein is Mitochondrial import inner membrane translocase subunit Tim23 (timm23) of Danio rerio (Zebrafish).